The primary structure comprises 589 residues: Aspartate--tRNA ligase (589 aa).

L-aspartate is bound at residue Glu175. The tract at residues 199-202 is aspartate; sequence QLFK. Arg221 lines the L-aspartate pocket. ATP contacts are provided by residues 221-223 and Gln230; that span reads RDE. Position 449 (His449) interacts with L-aspartate. Residue Glu483 coordinates ATP. Arg490 contributes to the L-aspartate binding site. 535–538 lines the ATP pocket; the sequence is GLDR.

It belongs to the class-II aminoacyl-tRNA synthetase family. Type 1 subfamily. In terms of assembly, homodimer.

Its subcellular location is the cytoplasm. It catalyses the reaction tRNA(Asp) + L-aspartate + ATP = L-aspartyl-tRNA(Asp) + AMP + diphosphate. Its function is as follows. Catalyzes the attachment of L-aspartate to tRNA(Asp) in a two-step reaction: L-aspartate is first activated by ATP to form Asp-AMP and then transferred to the acceptor end of tRNA(Asp). In Lysinibacillus sphaericus (strain C3-41), this protein is Aspartate--tRNA ligase.